The chain runs to 701 residues: Translation initiation factor IF-2 (701 aa).

Basic and acidic residues predominate over residues 48 to 62; sequence KIYKPEKAEQSEKSQ. A disordered region spans residues 48–123; that stretch reads KIYKPEKAEQ…EPKEMPSKIT (76 aa). 2 stretches are compositionally biased toward low complexity: residues 63–89 and 97–109; these read QKNT…NNKP and NNKN…NNKQ. Over residues 110 to 119 the composition is skewed to basic and acidic residues; the sequence is PKQEEPKEMP. One can recognise a tr-type G domain in the interval 203–372; that stretch reads ERPAVVTIMG…VLTSEVQELK (170 aa). A G1 region spans residues 212–219; sequence GHVDHGKT. Position 212 to 219 (212 to 219) interacts with GTP; sequence GHVDHGKT. The segment at 237–241 is G2; the sequence is GITQH. The segment at 258–261 is G3; the sequence is DTPG. Residues 258–262 and 312–315 each bind GTP; these read DTPGH and NKID. Positions 312-315 are G4; it reads NKID. A G5 region spans residues 348–350; sequence SAL.

The protein belongs to the TRAFAC class translation factor GTPase superfamily. Classic translation factor GTPase family. IF-2 subfamily.

It localises to the cytoplasm. In terms of biological role, one of the essential components for the initiation of protein synthesis. Protects formylmethionyl-tRNA from spontaneous hydrolysis and promotes its binding to the 30S ribosomal subunits. Also involved in the hydrolysis of GTP during the formation of the 70S ribosomal complex. This Staphylococcus saprophyticus subsp. saprophyticus (strain ATCC 15305 / DSM 20229 / NCIMB 8711 / NCTC 7292 / S-41) protein is Translation initiation factor IF-2.